We begin with the raw amino-acid sequence, 103 residues long: DNA-binding protein TRF1 (103 aa).

In terms of biological role, DNA-binding protein that recognizes the inverted terminal repeats of the pGKl linear DNA plasmids. This chain is DNA-binding protein TRF1 (TRF1), found in Kluyveromyces lactis (strain ATCC 8585 / CBS 2359 / DSM 70799 / NBRC 1267 / NRRL Y-1140 / WM37) (Yeast).